Here is a 372-residue protein sequence, read N- to C-terminus: Serine protease inhibitor 42Dd (372 aa).

The N-terminal stretch at 1-15 (MYYLCIFLWVTSVAC) is a signal peptide. 2 N-linked (GlcNAc...) asparagine glycosylation sites follow: asparagine 197 and asparagine 232.

This sequence belongs to the serpin family. As to expression, expressed in the ovary.

Its subcellular location is the secreted. Serine protease inhibitor with activity toward trypsin. Involved in innate immunity to fungal infection by negatively regulating the Toll signaling pathway and suppressing the expression of the antifungal peptide drosomycin. Acts upstream of SPE and grass, and downstream of the fungal cell wall pattern recognition receptor GNBP3. May function specifically in the GNBP3-dependent beta-1,3-glucan branch of the Toll pathway. In Drosophila melanogaster (Fruit fly), this protein is Serine protease inhibitor 42Dd.